The following is a 218-amino-acid chain: Copper acquisition factor BIM1 (218 aa).

The first 19 residues, 1–19, serve as a signal peptide directing secretion; that stretch reads MFALKSILVTSLITSTALA. Positions 20 and 65 each coordinate Cu(2+). 3 N-linked (GlcNAc...) asparagine glycosylation sites follow: N87, N91, and N124. D138 contributes to the Cu(2+) binding site. N158 and N170 each carry an N-linked (GlcNAc...) asparagine glycan. The interval 160-194 is disordered; it reads TCTNDASKASNATSTSSGSATATSAAATSSSSGTS. The span at 165–194 shows a compositional bias: low complexity; that stretch reads ASKASNATSTSSGSATATSAAATSSSSGTS. A lipid anchor (GPI-anchor amidated serine) is attached at S190. A propeptide spans 191 to 218 (removed in mature form); sequence SGTSGAIKEVVGFGALSLALGIAGLIIL.

Belongs to the X325 family. As to quaternary structure, interacts with the CUF1-dependent copper transporter CTR1. The cofactor is Cu(2+).

It localises to the cell membrane. Lytic polysaccharide monooxygenase-like protein that has diverged to biological functions other than polysaccharide degradation since it does not perform oxidative cleavage of polysaccharides. Cell surface-bound protein that functions in the copper-accumulation pathway shared by the CUF1-dependent copper transporter CTR1. Involved in maintaining cell wall integrity during copper deficiency. Binds Cu(2+) with an estimated 1:1 stoichiometry and might serve as an extracellular copper ligand. FRE4 and FRE7 metalloreductases probably function together with CTR1 and BIM1 to liberate the Cu(2+) bound to the BIM1 copper-binding site for subsequent import of Cu(+) into the cell by CTR1, via the reduction of BIM1-bound Cu(2+) to Cu(+) to reduce binding affinity for BIM1 but increase affinity for CTR1. Facilitates copper acquisition in the brain of mammalian hosts and acts as a copper-dependent virulence trait in fungal meningitis. While BIM1 plays a critical role in cryptococcal meningitis, at least in part through its role in copper acquisition, it could play additional roles during copper limitation or as a means to invade and colonize host tissues in the brain, by compromising host carbohydrate integrity via its lytic polysaccharide monooxygenase (LPMO) activity, which has still to be determined. The sequence is that of Copper acquisition factor BIM1 from Cryptococcus neoformans var. grubii serotype A (strain H99 / ATCC 208821 / CBS 10515 / FGSC 9487) (Filobasidiella neoformans var. grubii).